Reading from the N-terminus, the 472-residue chain is MASPALTGGYRNLTAPVSLLRTLASTRVTTPLFRSNKHSPRFISSPKRFTCLSLLKTDSQNQTTLSSSSNSGYHEYNRLMPCPAYNLPPRIEHMVVLEDDVLVSEFISKQLDLPPLYVADLIRFGAVHYALVCPKPPPTATPEEIILFEEVTSPSVLKKRSSIKGKTVREAQKTFRVTHTNQYAEAGTYLRVHVHPKRSPRCYEIDWKSRIVAVTDSYVILDKPAGTTVGGTTDNIEESCATFASRALDLPEPLKTTHQIDNCTEGCVVFARTKEYCSVFHTKIRNKEVKKLYRALAAAPLPIGIISHYMRPKNMAPRLVAEDSIQGWHLCQLEVLECKKIPWPDAATEKKHDIEDCGWTSKEFAYECTINLLTGKTHQIRAQLAACGAPLVGDSMYMPAAIAEMGNPDTNPYGKAKKHYTMEENQKETAVAEWIDRHGKEPRVGIGLQACQISWDDDDGEHFYEAGTPWWR.

Residues 1–66 constitute a chloroplast transit peptide; sequence MASPALTGGY…TDSQNQTTLS (66 aa). In terms of domain architecture, S4 RNA-binding spans 101 to 208; the sequence is VLVSEFISKQ…SPRCYEIDWK (108 aa). The active site involves Asp-261.

This sequence belongs to the pseudouridine synthase RluA family.

Its subcellular location is the plastid. The protein resides in the chloroplast. It carries out the reaction a uridine in RNA = a pseudouridine in RNA. The sequence is that of RNA pseudouridine synthase 6, chloroplastic from Arabidopsis thaliana (Mouse-ear cress).